Here is a 214-residue protein sequence, read N- to C-terminus: tRNA (guanine-N(7)-)-methyltransferase (214 aa).

Glu-43, Glu-68, Asp-95, and Asp-117 together coordinate S-adenosyl-L-methionine. Asp-117 is an active-site residue. Residues Lys-121, Asp-153, and 190–193 (TEYE) each bind substrate.

This sequence belongs to the class I-like SAM-binding methyltransferase superfamily. TrmB family.

It carries out the reaction guanosine(46) in tRNA + S-adenosyl-L-methionine = N(7)-methylguanosine(46) in tRNA + S-adenosyl-L-homocysteine. It functions in the pathway tRNA modification; N(7)-methylguanine-tRNA biosynthesis. Functionally, catalyzes the formation of N(7)-methylguanine at position 46 (m7G46) in tRNA. This is tRNA (guanine-N(7)-)-methyltransferase from Staphylococcus aureus (strain MSSA476).